The primary structure comprises 347 residues: Mitochondrial glycine transporter (347 aa).

3 Solcar repeats span residues 18–102 (SKPT…LRTA), 138–222 (LSHT…SKRS), and 247–331 (STAS…LIMW). 6 helical membrane passes run 24-49 (FAAG…TRVQ), 77-103 (GTLP…RTAV), 144-169 (LITG…VRYE), 197-220 (GFGA…EQSK), 251-277 (INFI…KTRV), and 306-324 (GLGL…AWTV).

It belongs to the mitochondrial carrier (TC 2.A.29) family. SLC25A38 subfamily.

The protein resides in the mitochondrion inner membrane. The enzyme catalyses glycine(in) = glycine(out). In terms of biological role, mitochondrial glycine transporter that imports glycine into the mitochondrial matrix. Plays an important role in providing glycine for the first enzymatic step in heme biosynthesis, the condensation of glycine with succinyl-CoA to produce 5-aminolevulinate (ALA) in the mitochondrial matrix. The chain is Mitochondrial glycine transporter from Coccidioides immitis (strain RS) (Valley fever fungus).